Reading from the N-terminus, the 231-residue chain is Small ribosomal subunit protein uS3 (231 aa).

A KH type-2 domain is found at 17 to 86; it reads VEQYLNKELK…SPQVEVQQVA (70 aa).

Belongs to the universal ribosomal protein uS3 family. As to quaternary structure, part of the 30S ribosomal subunit.

Binds the lower part of the 30S subunit head. This Methanocorpusculum labreanum (strain ATCC 43576 / DSM 4855 / Z) protein is Small ribosomal subunit protein uS3.